Consider the following 101-residue polypeptide: UPF0213 protein lp_2058 (101 aa).

A GIY-YIG domain is found at 15 to 92; the sequence is KKYYFYVLLC…KHQSRAAKLK (78 aa).

Belongs to the UPF0213 family.

The protein is UPF0213 protein lp_2058 of Lactiplantibacillus plantarum (strain ATCC BAA-793 / NCIMB 8826 / WCFS1) (Lactobacillus plantarum).